We begin with the raw amino-acid sequence, 337 residues long: Calcium-binding protein 39-like (337 aa).

The protein belongs to the Mo25 family. In terms of assembly, component of a trimeric complex composed of STK11/LKB1, STRAD (STRADA or STRADB) and CAB39/MO25 (CAB39/MO25alpha or CAB39L/MO25beta): the complex tethers STK11/LKB1 in the cytoplasm and stimulates its catalytic activity.

Functionally, component of a complex that binds and activates STK11/LKB1. In the complex, required to stabilize the interaction between CAB39/MO25 (CAB39/MO25alpha or CAB39L/MO25beta) and STK11/LKB1. In Mus musculus (Mouse), this protein is Calcium-binding protein 39-like (Cab39l).